Consider the following 437-residue polypeptide: Trigger factor (437 aa).

The PPIase FKBP-type domain occupies 163-248 (GHMVTIDYAF…LNEIKRKELP (86 aa)).

The protein belongs to the FKBP-type PPIase family. Tig subfamily.

The protein resides in the cytoplasm. The enzyme catalyses [protein]-peptidylproline (omega=180) = [protein]-peptidylproline (omega=0). Its function is as follows. Involved in protein export. Acts as a chaperone by maintaining the newly synthesized protein in an open conformation. Functions as a peptidyl-prolyl cis-trans isomerase. This chain is Trigger factor, found in Pelobacter propionicus (strain DSM 2379 / NBRC 103807 / OttBd1).